Consider the following 249-residue polypeptide: Probable phosphatase Shal_1519 (249 aa).

Residues H8, H10, H16, H41, E74, H102, H132, D193, and H195 each coordinate Zn(2+).

Belongs to the PHP family. Zn(2+) is required as a cofactor.

The polypeptide is Probable phosphatase Shal_1519 (Shewanella halifaxensis (strain HAW-EB4)).